The primary structure comprises 622 residues: Elongation factor 4 (622 aa).

Residues 17–201 (ALIRNFCIIA…KVVAEVPAPV (185 aa)) enclose the tr-type G domain. GTP contacts are provided by residues 29–34 (DHGKST) and 148–151 (NKID).

Belongs to the TRAFAC class translation factor GTPase superfamily. Classic translation factor GTPase family. LepA subfamily.

It is found in the cell membrane. It carries out the reaction GTP + H2O = GDP + phosphate + H(+). Its function is as follows. Required for accurate and efficient protein synthesis under certain stress conditions. May act as a fidelity factor of the translation reaction, by catalyzing a one-codon backward translocation of tRNAs on improperly translocated ribosomes. Back-translocation proceeds from a post-translocation (POST) complex to a pre-translocation (PRE) complex, thus giving elongation factor G a second chance to translocate the tRNAs correctly. Binds to ribosomes in a GTP-dependent manner. This chain is Elongation factor 4, found in Streptomyces coelicolor (strain ATCC BAA-471 / A3(2) / M145).